Here is a 222-residue protein sequence, read N- to C-terminus: N-acetyltransferase 8B (222 aa).

The Cytoplasmic portion of the chain corresponds to 1 to 42 (MVSYHICEYQDSDYKSVVDVFTKGAEEYIPSTFRHLLLLPRT). A helical; Signal-anchor for type II membrane protein transmembrane segment spans residues 43 to 67 (LLLLLGVSLALVLVSGSWLLAVVCI). The 156-residue stretch at 62-217 (LAVVCIFFLL…VGIRFVQLNY (156 aa)) folds into the N-acetyltransferase domain. Over 68–222 (FFLLPFLWFL…VQLNYSFPSA (155 aa)) the chain is Lumenal. The residue at position 99 (Lys99) is an N6-acetyllysine.

This sequence belongs to the NAT8 family. Post-translationally, acetylation on Lys-99 modulates enzymatic activity.

Its subcellular location is the endoplasmic reticulum-Golgi intermediate compartment membrane. It localises to the endoplasmic reticulum membrane. The catalysed reaction is L-lysyl-[protein] + acetyl-CoA = N(6)-acetyl-L-lysyl-[protein] + CoA + H(+). Endoplasmic reticulum (ER)-membrane-bound lysine N-acetyltransferase catalyzing the N6-acetylation of lysine residues in the lumen of the ER in various proteins, including PROM1 and BACE1, using acetyl-CoA as acetyl donor. Thereby, may regulate apoptosis through the acetylation and the regulation of the expression of PROM1. Acetylates and stabilizes BACE1 immature protein, leading to increased steady-state levels in neurons. By acting on BACE1 expression, may regulate amyloid beta-peptide formation. N(6)-lysine acetylation in ER maintains protein homeostasis and regulates reticulophagy. The polypeptide is N-acetyltransferase 8B (Rattus norvegicus (Rat)).